The following is a 276-amino-acid chain: Undecaprenyl-diphosphatase (276 aa).

6 consecutive transmembrane segments (helical) span residues Arg-43–Phe-63, Gly-85–Ile-105, Leu-109–Ala-129, Ala-183–Ser-203, Gly-214–Val-234, and Phe-249–Val-269.

The protein belongs to the UppP family.

The protein localises to the cell inner membrane. It carries out the reaction di-trans,octa-cis-undecaprenyl diphosphate + H2O = di-trans,octa-cis-undecaprenyl phosphate + phosphate + H(+). In terms of biological role, catalyzes the dephosphorylation of undecaprenyl diphosphate (UPP). Confers resistance to bacitracin. In Pseudomonas putida (strain ATCC 700007 / DSM 6899 / JCM 31910 / BCRC 17059 / LMG 24140 / F1), this protein is Undecaprenyl-diphosphatase.